The sequence spans 437 residues: Probable glycine dehydrogenase (decarboxylating) subunit 1 (437 aa).

This sequence belongs to the GcvP family. N-terminal subunit subfamily. In terms of assembly, the glycine cleavage system is composed of four proteins: P, T, L and H. In this organism, the P 'protein' is a heterodimer of two subunits.

It carries out the reaction N(6)-[(R)-lipoyl]-L-lysyl-[glycine-cleavage complex H protein] + glycine + H(+) = N(6)-[(R)-S(8)-aminomethyldihydrolipoyl]-L-lysyl-[glycine-cleavage complex H protein] + CO2. In terms of biological role, the glycine cleavage system catalyzes the degradation of glycine. The P protein binds the alpha-amino group of glycine through its pyridoxal phosphate cofactor; CO(2) is released and the remaining methylamine moiety is then transferred to the lipoamide cofactor of the H protein. The polypeptide is Probable glycine dehydrogenase (decarboxylating) subunit 1 (Thermotoga petrophila (strain ATCC BAA-488 / DSM 13995 / JCM 10881 / RKU-1)).